The following is a 499-amino-acid chain: Zinc finger protein PLAG1 (499 aa).

A disordered region spans residues 1–33 (MATVIPGDLSEVRDTQKAPSGKRKRGESKPRKN). The tract at residues 2 to 84 (ATVIPGDLSE…SKYKLQRHMA (83 aa)) is interaction with KPNA2. A Nuclear localization signal motif is present at residues 22-25 (KRKR). C2H2-type zinc fingers lie at residues 34–56 (FPCQLCDKAFNSVEKLKVHSFSH), 62–86 (YKCTHQDCTKAFVSKYKLQRHMATH), 92–114 (HKCNYCEKMFHRKDHLKNHLHTH), 121–143 (FKCEECGKSYNTKLGFKRHLALH), 150–172 (LTCKVCLQNFESTGVLLEHLKSH), 185–207 (HQCEHCERRFYTRKDVRRHMVVH), and 213–236 (FLCQYCAQRFGRKDHLTRHMKKSH). A decreased nuclear import with localization in the nucleus but also in the cytoplasm region spans residues 41-242 (KAFNSVEKLK…KKSHNQELLK (202 aa)). Residues 243-383 (VKTEPVDFLD…SPASSSKLGL (141 aa)) are repression domain; contains 3 sumoylation motifs and massively decrease transcription activity. Residues 243 to 499 (VKTEPVDFLD…TLPRFHQAFQ (257 aa)) are activates transcription; Inhibition of nuclear import due to lack of NLS and KPNA2 interaction. Residues Lys-244 and Lys-263 each participate in a glycyl lysine isopeptide (Lys-Gly) (interchain with G-Cter in SUMO) cross-link. A compositionally biased stretch (low complexity) spans 365-379 (GGAPSSSQDSPASSS). Residues 365–400 (GGAPSSSQDSPASSSKLGLEPQSGSPDDGAGDLSLS) are disordered. Positions 384-499 (EPQSGSPDDG…TLPRFHQAFQ (116 aa)) are massively activates transcription.

It belongs to the krueppel C2H2-type zinc-finger protein family. In terms of assembly, interacts with KPNA2, which escorts protein to the nucleus via interaction with nuclear localization signal. Interacts with E3 SUMO-protein ligase PIAS1, PIAS2 and PIAS4. Sumoylated with SUMO1; which inhibits transcriptional activity, but does not affect nuclear localization. Blockers of sumoylation pathway such as SENP3 and inactive UBE2I increases transcriptional capacity. Sumoylation is increased in the presence of PIAS1. In terms of processing, acetylated by lysine acetyltransferase EP300; which activates transcriptional capacity. Lysine residues that are sumoylated also seem to be target for acetylation. Expressed in heart, spleen, lung, kidney, brain, testis and epididymis but not in salivary glands.

It localises to the nucleus. Transcription factor whose activation results in up-regulation of target genes, such as IGFII, leading to uncontrolled cell proliferation: when overexpressed in cultured cells, higher proliferation rate and transformation are observed. Other target genes such as CRLF1, CRABP2, CRIP2, PIGF are strongly induced in cells with PLAG1 induction. Proto-oncogene whose ectopic expression can trigger the development of pleomorphic adenomas of the salivary gland and lipoblastomas. Cooperates with CBFB-MYH11. The chain is Zinc finger protein PLAG1 (Plag1) from Mus musculus (Mouse).